Consider the following 295-residue polypeptide: Sulfotransferase 1A2 (295 aa).

48–53 serves as a coordination point for 3'-phosphoadenylyl sulfate; sequence KSGTTW. A substrate-binding site is contributed by 106–108; that stretch reads KTH. The Proton acceptor role is filled by H108. Residues R130, S138, Y193, 227–232, and 255–259 contribute to the 3'-phosphoadenylyl sulfate site; these read TSFKEM and FMRKG.

The protein belongs to the sulfotransferase 1 family. Homodimer.

The protein resides in the cytoplasm. The enzyme catalyses a phenol + 3'-phosphoadenylyl sulfate = an aryl sulfate + adenosine 3',5'-bisphosphate + H(+). Functionally, sulfotransferase that utilizes 3'-phospho-5'-adenylyl sulfate (PAPS) as sulfonate donor to catalyze the sulfate conjugation of catecholamines, phenolic drugs and neurotransmitters. Is also responsible for the sulfonation and activation of minoxidil. Mediates the metabolic activation of carcinogenic N-hydroxyarylamines to DNA binding products and could so participate as modulating factor of cancer risk. This is Sulfotransferase 1A2 (SULT1A2) from Homo sapiens (Human).